A 273-amino-acid chain; its full sequence is MNNRVHQGHLARKRFGQNFLNDRFVIDSIVSAINPQKGQAMVEIGPGLAALTEPVGERLDKLTVIELDRDLAARLQTHPFLGPKLTIYQQDAMTMNFGELSAQLGQPLRVFGNLPYNISTPLMFHLFSYTDAIADMHFMLQKEVVNRLVAGPNSKAYGRLSVMAQYYCQVIPVLEVPPSAFTPPPKVDSAVVRLVPHATMPYPVKDIRVLSRITTEAFNQRRKTIRNSLDNLFSVETLTEMGIDPAMRAENISVAQYCQMANYLSENAPLKES.

S-adenosyl-L-methionine-binding residues include Asn18, Leu20, Gly45, Glu66, Asp91, and Asn113.

Belongs to the class I-like SAM-binding methyltransferase superfamily. rRNA adenine N(6)-methyltransferase family. RsmA subfamily.

The protein localises to the cytoplasm. The catalysed reaction is adenosine(1518)/adenosine(1519) in 16S rRNA + 4 S-adenosyl-L-methionine = N(6)-dimethyladenosine(1518)/N(6)-dimethyladenosine(1519) in 16S rRNA + 4 S-adenosyl-L-homocysteine + 4 H(+). Functionally, specifically dimethylates two adjacent adenosines (A1518 and A1519) in the loop of a conserved hairpin near the 3'-end of 16S rRNA in the 30S particle. May play a critical role in biogenesis of 30S subunits. This is Ribosomal RNA small subunit methyltransferase A from Salmonella newport (strain SL254).